The primary structure comprises 160 residues: Photosystem II extrinsic protein V (160 aa).

The signal sequence occupies residues 1-25 (MKRFILLAIATVFFFCQFQTNPVNA). Heme c is bound by residues cysteine 62, cysteine 65, histidine 66, and histidine 117.

This sequence belongs to the cytochrome c family. PsbV subfamily. As to quaternary structure, PSII is composed of 1 copy each of membrane proteins PsbA, PsbB, PsbC, PsbD, PsbE, PsbF, PsbH, PsbI, PsbJ, PsbK, PsbL, PsbM, PsbT, PsbX, PsbY, PsbZ, Psb30/Ycf12, peripheral proteins PsbO, CyanoQ (PsbQ), PsbU, PsbV and a large number of cofactors. It forms dimeric complexes. The cofactor is heme c.

The protein localises to the cellular thylakoid membrane. One of the extrinsic, lumenal subunits of photosystem II (PSII). PSII is a light-driven water plastoquinone oxidoreductase, using light energy to abstract electrons from H(2)O, generating a proton gradient subsequently used for ATP formation. The extrinsic proteins stabilize the structure of photosystem II oxygen-evolving complex (OEC), the ion environment of oxygen evolution and protect the OEC against heat-induced inactivation. Low-potential cytochrome c that plays a role in the OEC of PSII. The chain is Photosystem II extrinsic protein V from Rippkaea orientalis (strain PCC 8801 / RF-1) (Cyanothece sp. (strain PCC 8801)).